We begin with the raw amino-acid sequence, 450 residues long: Divalent metal cation transporter MntH (450 aa).

11 helical membrane-spanning segments follow: residues 44–64, 77–97, 121–141, 152–172, 181–201, 218–238, 273–293, 310–330, 366–386, 387–407, and 419–439; these read LLAF…PGNW, TLLS…SLAA, FLLW…EVIG, IPLI…LLLM, AFVI…IVAA, IFTN…TVMP, IALM…AATF, LLSP…ALLA, GIAI…GTAD, LLVF…IPLV, and FAIS…IVVL.

Belongs to the NRAMP family.

The protein localises to the cell inner membrane. H(+)-stimulated, divalent metal cation uptake system. The sequence is that of Divalent metal cation transporter MntH from Bradyrhizobium diazoefficiens (strain JCM 10833 / BCRC 13528 / IAM 13628 / NBRC 14792 / USDA 110).